Reading from the N-terminus, the 279-residue chain is GTP cyclohydrolase MptA (279 aa).

It belongs to the GTP cyclohydrolase IV family. Homodimer. It depends on Fe(2+) as a cofactor.

It catalyses the reaction GTP + H2O = 7,8-dihydroneopterin 2',3'-cyclic phosphate + formate + diphosphate + H(+). The protein operates within cofactor biosynthesis; 5,6,7,8-tetrahydromethanopterin biosynthesis. Its function is as follows. Converts GTP to 7,8-dihydro-D-neopterin 2',3'-cyclic phosphate, the first intermediate in the biosynthesis of coenzyme methanopterin. This Korarchaeum cryptofilum (strain OPF8) protein is GTP cyclohydrolase MptA.